Consider the following 207-residue polypeptide: Large ribosomal subunit protein uL4 (207 aa).

The interval 48–70 (KAQKTRSEVSGGGAKPWRQKGTG) is disordered.

It belongs to the universal ribosomal protein uL4 family. Part of the 50S ribosomal subunit.

In terms of biological role, one of the primary rRNA binding proteins, this protein initially binds near the 5'-end of the 23S rRNA. It is important during the early stages of 50S assembly. It makes multiple contacts with different domains of the 23S rRNA in the assembled 50S subunit and ribosome. Functionally, forms part of the polypeptide exit tunnel. This Francisella philomiragia subsp. philomiragia (strain ATCC 25017 / CCUG 19701 / FSC 153 / O#319-036) protein is Large ribosomal subunit protein uL4.